Consider the following 446-residue polypeptide: Tubulin beta chain (446 aa).

8 residues coordinate GTP: Q11, E69, S138, G142, T143, G144, N204, and N226. E69 serves as a coordination point for Mg(2+). Residues 423–446 are disordered; it reads QQYQDAGVDEEEEEYEEEPLPEDE. The segment covering 429-446 has biased composition (acidic residues); sequence GVDEEEEEYEEEPLPEDE.

This sequence belongs to the tubulin family. In terms of assembly, dimer of alpha and beta chains. A typical microtubule is a hollow water-filled tube with an outer diameter of 25 nm and an inner diameter of 15 nM. Alpha-beta heterodimers associate head-to-tail to form protofilaments running lengthwise along the microtubule wall with the beta-tubulin subunit facing the microtubule plus end conferring a structural polarity. Microtubules usually have 13 protofilaments but different protofilament numbers can be found in some organisms and specialized cells. Mg(2+) serves as cofactor.

Its subcellular location is the cytoplasm. It localises to the cytoskeleton. Functionally, tubulin is the major constituent of microtubules, a cylinder consisting of laterally associated linear protofilaments composed of alpha- and beta-tubulin heterodimers. Microtubules grow by the addition of GTP-tubulin dimers to the microtubule end, where a stabilizing cap forms. Below the cap, tubulin dimers are in GDP-bound state, owing to GTPase activity of alpha-tubulin. In Pestalotiopsis microspora, this protein is Tubulin beta chain (TUBB).